The sequence spans 151 residues: Regulatory protein RecX (151 aa).

This sequence belongs to the RecX family.

Its subcellular location is the cytoplasm. Functionally, modulates RecA activity. This chain is Regulatory protein RecX, found in Prosthecochloris aestuarii (strain DSM 271 / SK 413).